We begin with the raw amino-acid sequence, 1009 residues long: Probable beta-galactosidase B (1009 aa).

The first 21 residues, 1–21 (MAQLFTKIIVYFLLFASPLLA), serve as a signal peptide directing secretion. N-linked (GlcNAc...) asparagine glycosylation occurs at Asn28. Tyr85 contributes to the substrate binding site. N-linked (GlcNAc...) asparagine glycosylation is present at Asn95. The substrate site is built by Asn130, Ala131, Glu132, and Asn190. The active-site Proton donor is the Glu191. Asn247 carries N-linked (GlcNAc...) asparagine glycosylation. A substrate-binding site is contributed by Tyr260. Residues Cys266 and Cys319 are joined by a disulfide bond. Residue Glu303 is the Nucleophile of the active site. Residue Tyr368 coordinates substrate. 10 N-linked (GlcNAc...) asparagine glycosylation sites follow: Asn375, Asn406, Asn427, Asn451, Asn682, Asn740, Asn771, Asn784, Asn826, and Asn883.

The protein belongs to the glycosyl hydrolase 35 family.

It localises to the secreted. The catalysed reaction is Hydrolysis of terminal non-reducing beta-D-galactose residues in beta-D-galactosides.. Its function is as follows. Cleaves beta-linked terminal galactosyl residues from gangliosides, glycoproteins, and glycosaminoglycans. In Talaromyces marneffei (strain ATCC 18224 / CBS 334.59 / QM 7333) (Penicillium marneffei), this protein is Probable beta-galactosidase B (lacB).